We begin with the raw amino-acid sequence, 99 residues long: Large ribosomal subunit protein uL23 (99 aa).

It belongs to the universal ribosomal protein uL23 family. As to quaternary structure, part of the 50S ribosomal subunit. Contacts protein L29, and trigger factor when it is bound to the ribosome.

One of the early assembly proteins it binds 23S rRNA. One of the proteins that surrounds the polypeptide exit tunnel on the outside of the ribosome. Forms the main docking site for trigger factor binding to the ribosome. The sequence is that of Large ribosomal subunit protein uL23 from Psychromonas ingrahamii (strain DSM 17664 / CCUG 51855 / 37).